Reading from the N-terminus, the 414-residue chain is Serine hydroxymethyltransferase (414 aa).

(6S)-5,6,7,8-tetrahydrofolate contacts are provided by residues Leu-117 and 121 to 123; that span reads GHL. N6-(pyridoxal phosphate)lysine is present on Lys-226. 349–351 is a (6S)-5,6,7,8-tetrahydrofolate binding site; the sequence is SPF.

It belongs to the SHMT family. As to quaternary structure, homodimer. It depends on pyridoxal 5'-phosphate as a cofactor.

The protein localises to the cytoplasm. The catalysed reaction is (6R)-5,10-methylene-5,6,7,8-tetrahydrofolate + glycine + H2O = (6S)-5,6,7,8-tetrahydrofolate + L-serine. It participates in one-carbon metabolism; tetrahydrofolate interconversion. It functions in the pathway amino-acid biosynthesis; glycine biosynthesis; glycine from L-serine: step 1/1. Catalyzes the reversible interconversion of serine and glycine with tetrahydrofolate (THF) serving as the one-carbon carrier. This reaction serves as the major source of one-carbon groups required for the biosynthesis of purines, thymidylate, methionine, and other important biomolecules. Also exhibits THF-independent aldolase activity toward beta-hydroxyamino acids, producing glycine and aldehydes, via a retro-aldol mechanism. The sequence is that of Serine hydroxymethyltransferase from Desulfovibrio desulfuricans (strain ATCC 27774 / DSM 6949 / MB).